Consider the following 203-residue polypeptide: Ribosomal RNA large subunit methyltransferase E (203 aa).

5 residues coordinate S-adenosyl-L-methionine: Gly59, Trp61, Asp79, Asp97, and Asp119. The Proton acceptor role is filled by Lys159.

This sequence belongs to the class I-like SAM-binding methyltransferase superfamily. RNA methyltransferase RlmE family.

The protein resides in the cytoplasm. The catalysed reaction is uridine(2552) in 23S rRNA + S-adenosyl-L-methionine = 2'-O-methyluridine(2552) in 23S rRNA + S-adenosyl-L-homocysteine + H(+). Specifically methylates the uridine in position 2552 of 23S rRNA at the 2'-O position of the ribose in the fully assembled 50S ribosomal subunit. The polypeptide is Ribosomal RNA large subunit methyltransferase E (Desulforapulum autotrophicum (strain ATCC 43914 / DSM 3382 / VKM B-1955 / HRM2) (Desulfobacterium autotrophicum)).